A 141-amino-acid chain; its full sequence is Light-regulated protein 1, chloroplastic (141 aa).

The transit peptide at 1–41 (MQGALFIKPTILLPLPSSVSSPKLTFLLPHATKASRLSSLR) directs the protein to the chloroplast. The segment covering 35-51 (SRLSSLRSNNSSSSSSL) has biased composition (low complexity). Residues 35–58 (SRLSSLRSNNSSSSSSLTSDPNTV) form a disordered region. Residues 58-132 (VDYNSSILSV…ACDDLGGEFC (75 aa)) are 2 X 15 AA approximate repeats. 2 repeat units span residues 67 to 81 (VFPAEACEVISGYAC) and 118 to 132 (VFREEACDDLGGEFC).

As to quaternary structure, component of high molecular weight thylakoid LFNRs-containing protein complexes containing LIR1, LFNR1, LFNR2, TIC62 and TROL proteins. Interacts directly with LFNR1 and LFNR2; LIR1 increases the affinity of LFNR1 and LFNR2 for TIC62 and subsequent thylakoid relocalization. In terms of processing, may form interchain disulfide bonds with LFNR1 and LFNR2.

The protein resides in the plastid. Its subcellular location is the chloroplast thylakoid membrane. The protein localises to the chloroplast envelope. It is found in the chloroplast stroma. Functionally, thylakoid-determinant subunit of high molecular weight LFNRs-containing protein complexes. This chain is Light-regulated protein 1, chloroplastic, found in Arabidopsis thaliana (Mouse-ear cress).